The primary structure comprises 70 residues: Large ribosomal subunit protein bL31 (70 aa).

C16, C18, C38, and C41 together coordinate Zn(2+).

Belongs to the bacterial ribosomal protein bL31 family. Type A subfamily. In terms of assembly, part of the 50S ribosomal subunit. It depends on Zn(2+) as a cofactor.

In terms of biological role, binds the 23S rRNA. This is Large ribosomal subunit protein bL31 from Mycolicibacterium gilvum (strain PYR-GCK) (Mycobacterium gilvum (strain PYR-GCK)).